An 861-amino-acid polypeptide reads, in one-letter code: ToMV resistance protein Tm-2(GCR236) (861 aa).

Residues 63–83 (VKNLLKDIQELAGDVEDLLDD) are a coiled coil. The NB-ARC domain maps to 162 to 388 (DDFNMLQAKL…LESMGHKVQD (227 aa)). 185–192 (GMPGLGKT) contacts ATP. LRR repeat units lie at residues 225–248 (LDIA…NLRS), 305–327 (LHAL…IFNF), 388–411 (DGCA…CFLY), 449–472 (LAED…TYNG), 510–536 (VARL…KLEK), 585–608 (MTCL…IVKL), 609–631 (TRLE…VWES), 652–680 (ISSF…FFEP), 689–710 (LRKL…IFSP), 712–735 (LKAL…LSSY), 736–758 (PHIA…SFPP), 784–810 (LRKL…GYSF), and 811–835 (PQLE…DVSM).

The protein belongs to the disease resistance NB-LRR family. (Microbial infection) Interacts with tobamoviruses mouvement protein at the plasma membrane; this interaction triggers defense responses leading to programmed cell death. As to quaternary structure, binds to HSP90 proteins; this interaction seems required for defense responses toward tobamoviruses.

The protein resides in the cell membrane. Inhibitor of viral mouvements which confers resistance to some tobamoviruses including tomato mosaic virus (ToMV) (e.g. isolates L, W3 and SL-1) and tobacco mosaic virus (TMV), but not to resistance-breaking isolates (e.g. B7, LT1, LII, Ltbl, ToMV2, and ToMV1-2) ToMV and tomato brown rugose fruit virus (ToBRFV). Elicits a hypersensitive reaction in response to avirulent (Avr) movement proteins from resistance inducing tobamoviruses (e.g. ToMV and TMV) strains, thus leading to programmed cell death. The chain is ToMV resistance protein Tm-2(GCR236) from Solanum lycopersicum (Tomato).